The sequence spans 73 residues: Small ribosomal subunit protein bS18 (73 aa).

The protein belongs to the bacterial ribosomal protein bS18 family. Part of the 30S ribosomal subunit. Forms a tight heterodimer with protein bS6.

Its function is as follows. Binds as a heterodimer with protein bS6 to the central domain of the 16S rRNA, where it helps stabilize the platform of the 30S subunit. This Synechococcus sp. (strain WH7803) protein is Small ribosomal subunit protein bS18.